The chain runs to 122 residues: Large ribosomal subunit protein uL14c (122 aa).

Belongs to the universal ribosomal protein uL14 family. As to quaternary structure, part of the 50S ribosomal subunit.

The protein resides in the plastid. Its subcellular location is the chloroplast. Functionally, binds to 23S rRNA. This chain is Large ribosomal subunit protein uL14c, found in Huperzia lucidula (Shining clubmoss).